Here is a 227-residue protein sequence, read N- to C-terminus: Ion-translocating oxidoreductase complex subunit E (227 aa).

The next 5 membrane-spanning stretches (helical) occupy residues 34-56, 68-88, 91-111, 127-147, and 181-201; these read AINA…TIIS, IPIY…LLHA, FNLY…CIIV, FFDG…VGSI, and TIIL…LIAI.

Belongs to the NqrDE/RnfAE family. The complex is composed of six subunits: RnfA, RnfB, RnfC, RnfD, RnfE and RnfG.

The protein resides in the cell inner membrane. Its function is as follows. Part of a membrane-bound complex that couples electron transfer with translocation of ions across the membrane. The protein is Ion-translocating oxidoreductase complex subunit E of Buchnera aphidicola subsp. Acyrthosiphon pisum (strain APS) (Acyrthosiphon pisum symbiotic bacterium).